We begin with the raw amino-acid sequence, 227 residues long: 2-heptyl-1-hydroxyquinolin-4(1H)-one methyltransferase (227 aa).

It belongs to the methyltransferase superfamily. In terms of assembly, monomer.

The protein resides in the cytoplasm. The enzyme catalyses 2-heptyl-1-hydroxy-4(1H)-quinolinone + S-adenosyl-L-methionine = 2-heptyl-1-methoxy-4(1H)-quinolinone + S-adenosyl-L-homocysteine + H(+). It carries out the reaction 3-bromo-2-heptyl-1-hydroxy-4(1H)-quinolinone + S-adenosyl-L-methionine = 3-bromo-2-heptyl-1-methoxy-4(1H)-quinolinone + S-adenosyl-L-homocysteine + H(+). Involved in cellular response to chemical stress and may contribute to resistance toward antimicrobial natural compounds as well as drugs. Catalyzes the methylation and detoxification of the P.aeruginosa toxin 2-heptyl-1-hydroxy-4(1H)-quinolinone (HQNO) to 2-heptyl-1-methoxy-4(1H)-quinolinone (HMOQ). Can also methylate 3-bromo-2-heptyl-1-hydroxy-4(1H)-quinolinone, and shows much lower activity with 1-hydroxyquinolin-4(1H)-one, quercetin, 4-hydroxyquinolin-2(1H)-one (DHQ) and 4-hydroxyisoquinolin-1(2H)-one. This is 2-heptyl-1-hydroxyquinolin-4(1H)-one methyltransferase from Mycobacteroides abscessus (strain ATCC 19977 / DSM 44196 / CCUG 20993 / CIP 104536 / JCM 13569 / NCTC 13031 / TMC 1543 / L948) (Mycobacterium abscessus).